Here is a 714-residue protein sequence, read N- to C-terminus: Choline transporter-like protein 5 (714 aa).

Topologically, residues 1-33 are cytoplasmic; the sequence is MGRRSAAPTSPFGEPRKFDPKFKGPIGKRHCTD. Residues 34-54 form a helical membrane-spanning segment; that stretch reads VLCCIIFVVVILGYIALGVVA. Over 55 to 237 the chain is Extracellular; that stretch reads WIHGDPRKII…KIFEDYASSW (183 aa). Residues asparagine 83, asparagine 132, asparagine 192, and asparagine 205 are each glycosylated (N-linked (GlcNAc...) asparagine). The helical transmembrane segment at 238 to 258 threads the bilayer; sequence YWILIALFIAMVVSLLFLILL. The Cytoplasmic segment spans residues 259 to 261; it reads RFT. The chain crosses the membrane as a helical span at residues 262-282; that stretch reads AGVFFWIFIIGVIGVVGYGIW. Over 283–320 the chain is Extracellular; sequence HCFWEYDSLKGVPGADLTIYDIGLQTDFRVYLQLRQTW. Residues 321 to 341 form a helical membrane-spanning segment; it reads LAFMILLCIVEVIIILMLIFL. Topologically, residues 342–346 are cytoplasmic; it reads RNRIR. Residues 347–367 traverse the membrane as a helical segment; that stretch reads IAIALLQEGSRAIGYIMSTLF. The Extracellular segment spans residues 368 to 369; it reads YP. The helical transmembrane segment at 370-390 threads the bilayer; sequence IITFILIAICISYWAVTAVFM. The Cytoplasmic segment spans residues 391–455; that stretch reads ATSGEPIYKV…QYILIFQLCN (65 aa). The chain crosses the membrane as a helical span at residues 456 to 476; it reads VFVFLWLVNFSIALGQCTLAG. Residues 477-510 are Extracellular-facing; that stretch reads AFASYYWAFKKPADIPACPLFSSFGRAIRYHTGS. A helical transmembrane segment spans residues 511–531; the sequence is LALGSLILALVQFIRIILEYL. Residues 532–605 lie on the Cytoplasmic side of the membrane; the sequence is DHKLKASQNS…RVAVLDKVTD (74 aa). Residues 606 to 626 traverse the membrane as a helical segment; sequence FLLFLGKVFVTGSVGVLAFFF. Topologically, residues 627–644 are extracellular; sequence FTRKIPVLTDEAPALNYY. The chain crosses the membrane as a helical span at residues 645-665; that stretch reads WVPLLTVLIGSYLIAHGFFSV. Topologically, residues 666-711 are cytoplasmic; that stretch reads YAMCVDTLFLCFCEDLERNNGSSSKPYYMSPNLHRILGKKEILSKK.

This sequence belongs to the CTL (choline transporter-like) family.

The protein resides in the cell membrane. The catalysed reaction is choline(out) + n H(+)(in) = choline(in) + n H(+)(out). Functionally, choline/H+ antiporter. This Xenopus tropicalis (Western clawed frog) protein is Choline transporter-like protein 5 (slc44a5).